Here is a 157-residue protein sequence, read N- to C-terminus: S-ribosylhomocysteine lyase 2 (157 aa).

3 residues coordinate Fe cation: His-54, His-58, and Cys-124.

Belongs to the LuxS family. Homodimer. Fe cation is required as a cofactor.

It catalyses the reaction S-(5-deoxy-D-ribos-5-yl)-L-homocysteine = (S)-4,5-dihydroxypentane-2,3-dione + L-homocysteine. Involved in the synthesis of autoinducer 2 (AI-2) which is secreted by bacteria and is used to communicate both the cell density and the metabolic potential of the environment. The regulation of gene expression in response to changes in cell density is called quorum sensing. Catalyzes the transformation of S-ribosylhomocysteine (RHC) to homocysteine (HC) and 4,5-dihydroxy-2,3-pentadione (DPD). This is S-ribosylhomocysteine lyase 2 from Lactobacillus delbrueckii subsp. bulgaricus (strain ATCC BAA-365 / Lb-18).